A 279-amino-acid polypeptide reads, in one-letter code: Small ribosomal subunit protein uS2 (279 aa).

3 stretches are compositionally biased toward acidic residues: residues 1–18, 28–42, and 65–81; these read MTENDNEVVEVVDDDEAV, TATEAEADTETDESN, and ADAEPDDELEGPTFDED. The tract at residues 1–81 is disordered; that stretch reads MTENDNEVVE…ELEGPTFDED (81 aa).

This sequence belongs to the universal ribosomal protein uS2 family.

This is Small ribosomal subunit protein uS2 from Haloquadratum walsbyi (strain DSM 16790 / HBSQ001).